The primary structure comprises 386 residues: Homoserine O-succinyltransferase (386 aa).

In terms of domain architecture, AB hydrolase-1 spans 49 to 358; sequence NAILICHALS…DAEQGHDSFL (310 aa). The active-site Nucleophile is the serine 156. Arginine 226 serves as a coordination point for substrate. Active-site residues include aspartate 321 and histidine 354. Aspartate 355 provides a ligand contact to substrate.

This sequence belongs to the AB hydrolase superfamily. MetX family. Homodimer.

Its subcellular location is the cytoplasm. The catalysed reaction is L-homoserine + succinyl-CoA = O-succinyl-L-homoserine + CoA. The protein operates within amino-acid biosynthesis; L-methionine biosynthesis via de novo pathway; O-succinyl-L-homoserine from L-homoserine: step 1/1. Its function is as follows. Transfers a succinyl group from succinyl-CoA to L-homoserine, forming succinyl-L-homoserine. The protein is Homoserine O-succinyltransferase of Acinetobacter baumannii (strain AB307-0294).